The chain runs to 577 residues: Thiol:disulfide interchange protein DsbD (577 aa).

The N-terminal stretch at 1-23 (MAQRIFTLIFLLWTAVGTPQVAA) is a signal peptide. 2 cysteine pairs are disulfide-bonded: Cys131–Cys137 and Cys194–Cys316. Helical transmembrane passes span 182–202 (ALLI…YPLI), 225–245 (YVQG…AAGL), 255–275 (YILI…FGLY), 308–328 (LAGL…LLYI), 338–358 (GGTL…VTLF), 369–389 (WMQY…VFLL), and 396–416 (AWGI…ALML). The Thioredoxin domain maps to 437-577 (VISAKPLQDW…FQAHLQKFSP (141 aa)). A disulfide bridge connects residues Cys492 and Cys495.

Belongs to the thioredoxin family. DsbD subfamily.

It is found in the cell inner membrane. It catalyses the reaction [protein]-dithiol + NAD(+) = [protein]-disulfide + NADH + H(+). The enzyme catalyses [protein]-dithiol + NADP(+) = [protein]-disulfide + NADPH + H(+). In terms of biological role, required to facilitate the formation of correct disulfide bonds in some periplasmic proteins and for the assembly of the periplasmic c-type cytochromes. Acts by transferring electrons from cytoplasmic thioredoxin to the periplasm. This transfer involves a cascade of disulfide bond formation and reduction steps. This Pectobacterium atrosepticum (strain SCRI 1043 / ATCC BAA-672) (Erwinia carotovora subsp. atroseptica) protein is Thiol:disulfide interchange protein DsbD.